Here is a 161-residue protein sequence, read N- to C-terminus: Large ribosomal subunit protein uL10 (161 aa).

It belongs to the universal ribosomal protein uL10 family. Part of the ribosomal stalk of the 50S ribosomal subunit. The N-terminus interacts with L11 and the large rRNA to form the base of the stalk. The C-terminus forms an elongated spine to which L12 dimers bind in a sequential fashion forming a multimeric L10(L12)X complex.

In terms of biological role, forms part of the ribosomal stalk, playing a central role in the interaction of the ribosome with GTP-bound translation factors. The polypeptide is Large ribosomal subunit protein uL10 (rplJ) (Wigglesworthia glossinidia brevipalpis).